The primary structure comprises 168 residues: Small ribosomal subunit protein uS5 (168 aa).

The 64-residue stretch at 13–76 (IQEKLVAVRR…ENARRNMISV (64 aa)) folds into the S5 DRBM domain.

Belongs to the universal ribosomal protein uS5 family. Part of the 30S ribosomal subunit. Contacts proteins S4 and S8.

Functionally, with S4 and S12 plays an important role in translational accuracy. Its function is as follows. Located at the back of the 30S subunit body where it stabilizes the conformation of the head with respect to the body. This is Small ribosomal subunit protein uS5 from Coxiella burnetii (strain RSA 493 / Nine Mile phase I).